The chain runs to 447 residues: Blue-light photoreceptor PHR2 (447 aa).

Residues 1–14 (MDSSNVEENLNPET) show a composition bias toward polar residues. Positions 1–20 (MDSSNVEENLNPETKSAEEQ) are disordered. Residues 115 to 249 (RAAVVWFRND…EVKYFWGSTL (135 aa)) form the Photolyase/cryptochrome alpha/beta domain.

This sequence belongs to the DNA photolyase class-1 family. The cofactor is FAD.

This Arabidopsis thaliana (Mouse-ear cress) protein is Blue-light photoreceptor PHR2 (PHR2).